An 886-amino-acid polypeptide reads, in one-letter code: Cytosolic carboxypeptidase-like protein 5 (886 aa).

Positions 157–570 constitute a Peptidase M14 domain; the sequence is YPFSYSDCQE…AMAIAALDMA (414 aa). Zn(2+)-binding residues include His252 and Glu255. Positions 344 to 354 are enriched in low complexity; that stretch reads SQSSSEHQPSS. The interval 344–364 is disordered; the sequence is SQSSSEHQPSSCLPPDAPVSD. His434 contacts Zn(2+). The Proton donor/acceptor role is filled by Glu516. Disordered regions lie at residues 605-734 and 784-848; these read STLN…SSHK and LQAR…FSPI. A compositionally biased stretch (polar residues) spans 631 to 640; that stretch reads CSENTLSRAR. The segment covering 641-666 has biased composition (low complexity); sequence SFSTGTSAGGSSSSQQNSPQMKNSPS. The segment covering 696-705 has biased composition (basic and acidic residues); sequence REPRSQDRRR. Residues 714–732 show a composition bias toward low complexity; it reads PAGSLAPSPAPTSSGPASS. At Ser841 the chain carries Phosphoserine.

Belongs to the peptidase M14 family. Zn(2+) is required as a cofactor. As to expression, expressed in brain.

It localises to the cytoplasm. The protein localises to the cytosol. It is found in the nucleus. Its subcellular location is the cytoskeleton. The protein resides in the spindle. It localises to the midbody. It catalyses the reaction gamma-L-glutamyl-L-glutamyl-[protein] + H2O = L-glutamyl-[protein] + L-glutamate. The enzyme catalyses (L-glutamyl)(n+1)-gamma-L-glutamyl-L-glutamyl-[protein] + H2O = (L-glutamyl)(n)-gamma-L-glutamyl-L-glutamyl-[protein] + L-glutamate. It carries out the reaction C-terminal L-alpha-aminoacyl-L-glutamyl-[tubulin] + H2O = C-terminal L-alpha-aminoacyl-[tubulin] + L-glutamate. The catalysed reaction is C-terminal L-alpha-aminoacyl-L-glutamyl-L-glutamyl-[tubulin] + H2O = C-terminal L-alpha-aminoacyl-L-glutamyl-[tubulin] + L-glutamate. Its function is as follows. Metallocarboxypeptidase that mediates deglutamylation of tubulin and non-tubulin target proteins. Catalyzes the removal of polyglutamate side chains present on the gamma-carboxyl group of glutamate residues within the C-terminal tail of alpha- and beta-tubulin. Cleaves alpha- and gamma-linked polyglutamate tubulin side-chain, as well as the branching point glutamate. Also catalyzes the removal of alpha-linked glutamate residues from the carboxy-terminus of alpha-tubulin. Mediates deglutamylation of nucleotidyltransferase CGAS, leading to CGAS antiviral defense response activation. This Homo sapiens (Human) protein is Cytosolic carboxypeptidase-like protein 5.